A 108-amino-acid polypeptide reads, in one-letter code: Ig kappa chain V region K-25 (108 aa).

The segment at 1 to 23 (AVELTQTPASVEAAVGGTVTIKC) is framework-1. A complementarity-determining-1 region spans residues 24–34 (QASQBIYSYLS). The segment at 35–49 (WYQQKPGQPPKLLIY) is framework-2. The tract at residues 50–56 (KASTLAS) is complementarity-determining-2. The framework-3 stretch occupies residues 57–88 (GVSSRFKGSGSGTEFTLTISDLZCADAATYYC). Residues 89–97 (QTYSYSSTY) form a complementarity-determining-3 region. Residues 98–107 (FGGGTEVVVK) are framework-4.

The sequence is that of Ig kappa chain V region K-25 from Oryctolagus cuniculus (Rabbit).